A 353-amino-acid polypeptide reads, in one-letter code: MCGRTSCHLPREVLTRACAYQDRQGRRRLPQWRDPDKYCPSYNKSPQSSSPVLLSRLHFEKDADSSDRIIIPMRWGLVPSWFKESDPSKLQFNTTNCRSDTIMEKQSFKVPLGKGRRCVVLADGFYEWQRCQGTNQRQPYFIYFPQIKTEKSGGNDASDSSDNKEKVWDNWRLLTMAGIFDCWEAPGGECLYSYSIITVDSCRGLSDIHSRMPAILDGEEAVSKWLDFGEVATQEALKLIHPIDNITFHPVSPVVNNSRNNTPECLAPADLLVKKEPKANGSSQRMMQWLATKSPKKEVPDSPKKDASGLPQWSSQFLQKSPLPAKRGATSSFLDRWLKQEKEDEPMAKKPNS.

The active-site Nucleophile is the Cys-2. Thiazolidine linkage to a ring-opened DNA abasic site is present on Cys-2. Glu-127 is a catalytic residue. Glycyl lysine isopeptide (Lys-Gly) (interchain with G-Cter in SUMO2) cross-links involve residues Lys-148 and Lys-151. Residue Ser-160 is modified to Phosphoserine. Residues Lys-274 and Lys-275 each participate in a glycyl lysine isopeptide (Lys-Gly) (interchain with G-Cter in SUMO2) cross-link. The disordered stretch occupies residues 292–353; the sequence is TKSPKKEVPD…DEPMAKKPNS (62 aa). A Phosphoserine modification is found at Ser-294. Basic and acidic residues predominate over residues 295-307; the sequence is PKKEVPDSPKKDA. Lys-305 participates in a covalent cross-link: Glycyl lysine isopeptide (Lys-Gly) (interchain with G-Cter in SUMO2). At Ser-321 the chain carries Phosphoserine. The PIP-box signature appears at 332 to 338; that stretch reads SFLDRWL. Basic and acidic residues predominate over residues 336 to 353; sequence RWLKQEKEDEPMAKKPNS. Glycyl lysine isopeptide (Lys-Gly) (interchain with G-Cter in SUMO2) cross-links involve residues Lys-339 and Lys-342.

The protein belongs to the SOS response-associated peptidase family. In terms of assembly, interacts (via PIP-box motif) with PCNA. Expressed in embryonic stem cells.

The protein localises to the chromosome. Formation and reversal of DNA-protein cross-link depends on DNA context. Catalyzes formation of the thiazolidine linkage in presence of abasic sites in single-stranded DNA. Mediates the reversal of the thiazolidine cross-link in presence of double stranded DNA. In terms of biological role, sensor of abasic sites in single-stranded DNA (ssDNA) required to preserve genome integrity by promoting error-free repair of abasic sites. Acts as an enzyme that recognizes and binds abasic sites in ssDNA at replication forks and chemically modifies the lesion by forming a covalent cross-link with DNA: forms a stable thiazolidine linkage between a ring-opened abasic site and the alpha-amino and sulfhydryl substituents of its N-terminal catalytic cysteine residue. Promotes error-free repair by protecting abasic sites from translesion synthesis (TLS) polymerases and endonucleases that are error-prone and would generate mutations and double-strand breaks. The HMCES DNA-protein cross-link is then either reversed or degraded. HMCES is able to catalyze the reversal of its thiazolidine cross-link and cycle between a cross-link and a non-cross-linked state depending on DNA context: mediates self-reversal of the thiazolidine cross-link in double stranded DNA, allowing APEX1 to initiate downstream repair of abasic sites. The HMCES DNA-protein cross-link can also be degraded by the SPRTN metalloprotease following unfolding by the BRIP1/FANCJ helicase. Has preference for ssDNA, but can also accommodate double-stranded DNA with 3' or 5' overhang (dsDNA), and dsDNA-ssDNA 3' junction. Plays a protective role during somatic hypermutation of immunoglobulin genes in B-cells: acts via its ability to form covalent cross-links with abasic sites, thereby limiting the accumulation of deletions in somatic hypermutation target regions. Also involved in class switch recombination (CSR) in B-cells independently of the formation of a DNA-protein cross-link: acts by binding and protecting ssDNA overhangs to promote DNA double-strand break repair through the microhomology-mediated alternative-end-joining (Alt-EJ) pathway. Acts as a protease: mediates autocatalytic processing of its N-terminal methionine in order to expose the catalytic cysteine. In Mus musculus (Mouse), this protein is Abasic site processing protein HMCES.